The primary structure comprises 504 residues: Pup--protein ligase (504 aa).

Residue Glu30 participates in Mg(2+) binding. Arg74 serves as a coordination point for ATP. Tyr76 serves as a coordination point for Mg(2+). Asp78 acts as the Proton acceptor in catalysis. Glu84 lines the Mg(2+) pocket. Residues Thr87 and Trp459 each contribute to the ATP site.

Belongs to the Pup ligase/Pup deamidase family. Pup-conjugating enzyme subfamily.

It catalyses the reaction ATP + [prokaryotic ubiquitin-like protein]-L-glutamate + [protein]-L-lysine = ADP + phosphate + N(6)-([prokaryotic ubiquitin-like protein]-gamma-L-glutamyl)-[protein]-L-lysine.. Its pathway is protein degradation; proteasomal Pup-dependent pathway. The protein operates within protein modification; protein pupylation. In terms of biological role, catalyzes the covalent attachment of the prokaryotic ubiquitin-like protein modifier Pup to the proteasomal substrate proteins, thereby targeting them for proteasomal degradation. This tagging system is termed pupylation. The ligation reaction involves the side-chain carboxylate of the C-terminal glutamate of Pup and the side-chain amino group of a substrate lysine. This chain is Pup--protein ligase, found in Corynebacterium urealyticum (strain ATCC 43042 / DSM 7109).